Reading from the N-terminus, the 123-residue chain is Integration host factor subunit alpha (123 aa).

The protein belongs to the bacterial histone-like protein family. In terms of assembly, heterodimer of an alpha and a beta chain.

This protein is one of the two subunits of integration host factor, a specific DNA-binding protein that functions in genetic recombination as well as in transcriptional and translational control. The protein is Integration host factor subunit alpha of Polaromonas naphthalenivorans (strain CJ2).